A 341-amino-acid polypeptide reads, in one-letter code: Probable membrane-associated kinase regulator 1 (341 aa).

Disordered stretches follow at residues 1 to 29 (MRRQ…FEFN), 67 to 122 (TLGS…SSRP), 158 to 185 (PKTN…KRMS), 206 to 230 (LSPK…NNIR), and 288 to 310 (RGGF…SVSS). Low complexity-rich tracts occupy residues 12–29 (PPQS…FEFN), 67–108 (TLGS…SFPL), and 167–180 (SSSS…APSS). A compositionally biased stretch (polar residues) spans 208–230 (PKQSSNIKTESSSSLKDSGNNIR). Over residues 297-310 (SCSSSSSNNNSVSS) the composition is skewed to low complexity.

In terms of assembly, a C-terminus-derived peptide binds BRI1 in vitro.

The protein localises to the cell membrane. Its function is as follows. May negatively regulate brassinosteroid signaling. The chain is Probable membrane-associated kinase regulator 1 (MAKR1) from Arabidopsis thaliana (Mouse-ear cress).